The primary structure comprises 353 residues: MLLFETVREMGHEQVLFCHGKNPEIKAIIAIHDTTLGPAMGATRLMPYVNEEAALKDALRLSRGMTYKAACANIPAGGGKAVIIANPENKTDDLLRAYGRFVNSLNGRFITGQDVNITPDDVRTISQETNHVVGVSEKSGGPAPITSLGVFLGIKAAVESRWQSKRLDGMKVAVQGLGNVGKNLCRHLHEHDVKLFVSDVDPAKAEEAKRLFGATVVEPTEIYSLDVDIFSPCALGGILNSHTIPFLQAQIIAGAANNQLENEQLHSQMLTRKGILYSPDYVINAGGLINVYNEMIGYDEEKAFKQVHNIYDTLLAIFDIAKEQGVTTNDAAKRLAEDRISNSKRSKSKAIAA.

Arginine 44 lines the NAD(+) pocket. Catalysis depends on lysine 80, which acts as the Proton donor/acceptor. NAD(+)-binding positions include aspartate 114, threonine 146, 176–181, lysine 204, and 255–257; these read GLGNVG and AAN.

This sequence belongs to the Glu/Leu/Phe/Val dehydrogenases family. As to quaternary structure, homodimer.

The catalysed reaction is L-tryptophan + NAD(+) + H2O = indole-3-pyruvate + NH4(+) + NADH + H(+). Functionally, catalyzes the reversible oxidative deamination of L-tryptophan to indole-3-pyruvate in the presence of NAD(+). Cannot use other L-amino acids and D-Trp. Involved in the biosynthesis of scytonemin, a cyanobacterial radiation-absorbing pigment. The sequence is that of L-tryptophan dehydrogenase from Nostoc punctiforme (strain ATCC 29133 / PCC 73102).